A 192-amino-acid chain; its full sequence is Neurogenic differentiation factor 1 (192 aa).

The bHLH domain occupies 19–71 (VRRVKANGRERARMHGLNNALDMLREYIPITTQHQKLSKIETLRLARNYIDAL). Residues 116–192 (PSQFDIFSDP…SHQNTFNYSP (77 aa)) are disordered. The span at 139-163 (SSFSSSSPSSSCSPPQYYYSPTQPS) shows a compositional bias: low complexity.

As to expression, expressed in neuroblasts of the AB lineage. More specifically in precursors of the embryonic ventral cord motor neurons. Expressed to a lesser degree in the EMS lineage which generates mostly endoderm and mesoderm tissues.

Its subcellular location is the nucleus. Acts as a transcriptional regulator whose activity is required for several aspects of motor neuron fate specification, including cell division patterns, proper spatiotemporal expression of fate-specific markers, and normal axonal morphology and pathfinding. Involved in regulating glial specification. The protein is Neurogenic differentiation factor 1 (cnd-1) of Caenorhabditis elegans.